Reading from the N-terminus, the 318-residue chain is Magnetosome protein MamM (318 aa).

Residues 1 to 210 are transmembrane domain (TMD); that stretch reads MRKSGCAVCS…FMDAYRGLMD (210 aa). The next 4 helical transmembrane spans lie at 13–33, 39–59, 81–101, and 117–137; these read IGWVGLAVSTVLMVMKAFVGL, AMLADAMYSLKDMLNALMVII, FILSMVVSVVFIVLTGYLLVH, and LIVLWAALVSIGVNVGMYFYS. The segment at 211–318 is C-terminal domain (CTD); the sequence is HTAGEAVQNR…DEVMLSKVDN (108 aa). Fe cation is bound by residues aspartate 249, histidine 264, histidine 285, and glutamate 289.

The protein belongs to the cation diffusion facilitator (CDF) transporter (TC 2.A.4) family. As to quaternary structure, forms homodimers via its C-terminal domain (CTD) in the presence of metal cations. Interacts with MamB via their CTD. Isolated CTD forms homodimers.

Its subcellular location is the magnetosome membrane. It is found in the cell inner membrane. Functionally, essential for magnetosome formation; required for stable accumulation of MamB. May nucleate iron crystal formation. Probably binds and transports iron. Binds divalent cations, possibly up to 3 Zn(2+) per dimer in vitro, probably iron in vivo. One of 7 genes (mamLQBIEMO) able to induce magnetosome membrane biogenesis; coexpression of mamLQRBIEMO in a deletion of the 17 gene mamAB operon restores magnetosome vesicle formation but not magnetite biosynthesis. The chain is Magnetosome protein MamM from Magnetospirillum gryphiswaldense (strain DSM 6361 / JCM 21280 / NBRC 15271 / MSR-1).